Here is a 360-residue protein sequence, read N- to C-terminus: MNAPLGGIWLWLPLLLTWLTPEVSSSWWYMRATGGASRVMCDNVPGLVSRQRQLCHRHPDVMRAIGLGVAEWTAECQHQFRQHRWNCNTLDRDHSLFGRVLLRSSRESAFVYAISSAGVVFAITRACSQGELRSCSCDPKKKGTAKDSKGTFDWGGCSDNIDYGIKFARAFVDAKERKGKDARALMNLHNNRAGRKAVKRFLKQECKCHGVSGSCTLRTCWLAMADFRKTGDYLWRKYNGAIQVVMNQDGTGFTVANKKFKKPTKNDLVYFENSPDYCIRDRDAGSLGTAGRVCNLTSRGMDSCEVMCCGRGYDTSRVTRMTKCECKFHWCCAVRCQDCLEALDVHTCKAPKSADWASPT.

Positions 1–25 (MNAPLGGIWLWLPLLLTWLTPEVSS) are cleaved as a signal peptide. 11 disulfides stabilise this stretch: cysteine 76–cysteine 87, cysteine 127–cysteine 135, cysteine 137–cysteine 157, cysteine 206–cysteine 220, cysteine 208–cysteine 215, cysteine 278–cysteine 309, cysteine 294–cysteine 304, cysteine 308–cysteine 348, cysteine 324–cysteine 339, cysteine 326–cysteine 336, and cysteine 331–cysteine 332. Residue serine 212 is the site of O-palmitoleoyl serine; by PORCN attachment. N-linked (GlcNAc...) asparagine glycosylation is present at asparagine 295.

This sequence belongs to the Wnt family. Palmitoleoylation is required for efficient binding to frizzled receptors. Depalmitoleoylation leads to Wnt signaling pathway inhibition.

The protein localises to the secreted. The protein resides in the extracellular space. It localises to the extracellular matrix. Ligand for members of the frizzled family of seven transmembrane receptors. Functions in the canonical Wnt signaling pathway that results in activation of transcription factors of the TCF/LEF family. Functions as a upstream regulator of FGF10 expression. Plays an important role in embryonic lung development. May contribute to embryonic brain development by regulating the proliferation of dopaminergic precursors and neurons. The polypeptide is Protein Wnt-2 (WNT2) (Equus caballus (Horse)).